A 176-amino-acid chain; its full sequence is Secreted LysM effector ELP2 (176 aa).

Residues 1 to 18 (MQFSIFTVLAAAASFAVA) form the signal peptide. A compositionally biased stretch (low complexity) spans 31–45 (TSAAANPSPTTSGAA). Positions 31–50 (TSAAANPSPTTSGAANPSPT) are disordered. One can recognise a LysM 1 domain in the interval 58–102 (HKTTVKAGQTLTTIAERFHSGICDIAWQNKLENPNVIFVGQVLLV). Asparagine 111 carries N-linked (GlcNAc...) asparagine glycosylation. The region spanning 129–173 (ATYTIKSGDTFFAVAQSLGITTDSLTGANPGVVPENLQIDQVINV) is the LysM 2 domain.

It belongs to the secreted LysM effector family. In terms of assembly, forms homodimers in a chitin-independent manner through interactions at the N-termini of EPL2 monomers. Homodimers are further polymerized in a chitin-dependent manner.

Its subcellular location is the secreted. Functionally, secreted effector that enables the plant pathogenic fungus to manipulate host defenses for successful infection. Binds chitin oligomers and polymer with high affinity and plays a dual role, not only in the suppression of chitin-triggered immune responses, but also in appressorium function. Does not protect fungal hyphae against plant chitinases but suppresses chitin-triggered plant immune responses. Chitin-induced polymerization of homodimers forms a contiguous ELP2 highly oligomeric super-complexe that may precipitate at infection sites to eliminate chitin oligomers, and thus suppress the activation of chitin-induced plant immunity. The sequence is that of Secreted LysM effector ELP2 from Colletotrichum higginsianum (strain IMI 349063) (Crucifer anthracnose fungus).